The following is a 1173-amino-acid chain: Ubiquitin conjugation factor E4 B (1173 aa).

An N-acetylmethionine modification is found at Met1. The interval 1–155 (MEELSADEIR…EPSSGPEVSE (155 aa)) is disordered. The span at 16 to 33 (RLAGGQTSQPTTPLTSPQ) shows a compositional bias: low complexity. Phosphoserine is present on residues Ser23 and Ser31. Residues 51–64 (QSLGLNVHNMTPAT) are compositionally biased toward polar residues. Over residues 76 to 99 (SQSSEGVSSLSSSPSNSLETQSQS) the composition is skewed to low complexity. Phosphoserine is present on residues Ser84, Ser88, Ser90, Ser101, Ser103, Ser105, and Ser124. The segment covering 134–147 (NDRREKRSLSDKEP) has biased composition (basic and acidic residues). Residues Ser238, Ser674, and Ser840 each carry the phosphoserine modification. The segment at 928 to 948 (NKEQWDQLPRDQQQARQSQLA) is disordered. Low complexity predominate over residues 937 to 948 (RDQQQARQSQLA). Residues 1098 to 1171 (DAPDEFRDPL…QAWMREKQSS (74 aa)) enclose the U-box domain. Residue Ser1136 is modified to Phosphoserine.

This sequence belongs to the ubiquitin conjugation factor E4 family. Interacts with VCP. Interacts with STUB1/CHIP and UNC45B. Post-translationally, proteolytically cleaved by caspases during apoptosis. Cleaved efficiently at Asp-123 by caspase-6 and granzyme B. Cleaved with approximately 10-fold less efficiency at Asp-109 by caspase-3 and caspase-7. As to expression, expressed predominantly in neuronal tissues. Also detected in liver, heart, brain, kidney and testis.

Its subcellular location is the cytoplasm. It localises to the nucleus. It catalyses the reaction S-ubiquitinyl-[E2 ubiquitin-conjugating enzyme]-L-cysteine + [acceptor protein]-L-lysine = [E2 ubiquitin-conjugating enzyme]-L-cysteine + N(6)-ubiquitinyl-[acceptor protein]-L-lysine.. Its pathway is protein modification; protein ubiquitination. In terms of biological role, ubiquitin-protein ligase that probably functions as an E3 ligase in conjunction with specific E1 and E2 ligases. May also function as an E4 ligase mediating the assembly of polyubiquitin chains on substrates ubiquitinated by another E3 ubiquitin ligase. May regulate myosin assembly in striated muscles together with STUB1 and VCP/p97 by targeting myosin chaperone UNC45B for proteasomal degradation. This chain is Ubiquitin conjugation factor E4 B, found in Mus musculus (Mouse).